A 185-amino-acid chain; its full sequence is Capsid protein (185 aa).

The disordered stretch occupies residues 136–185; that stretch reads NAPILSTLPETTVVRRRDRGRSPRRRTPSPRRRRSQSPRRRRSQSRESQC. Residues 149 to 178 show a composition bias toward basic residues; sequence VRRRDRGRSPRRRTPSPRRRRSQSPRRRRS. Phosphoserine; by host occurs at positions 157, 164, and 172. Residues 157-163 form a 1; half-length repeat; sequence SPRRRTP. Residues 157–179 form a 3 X 8 AA repeats of S-P-R-R-R-[PR]-S-Q region; the sequence is SPRRRTPSPRRRRSQSPRRRRSQ. A Bipartite nuclear localization signal motif is present at residues 160–177; sequence RRTPSPRRRRSQSPRRRR. 2 tandem repeats follow at residues 164–171 and 172–179. Residues 179–185 are RNA binding; that stretch reads QSRESQC.

The protein belongs to the orthohepadnavirus core antigen family. In terms of assembly, homodimerizes, then multimerizes. Interacts with cytosol exposed regions of viral L glycoprotein present in the reticulum-to-Golgi compartment. Interacts with human FLNB. Phosphorylated form interacts with host importin alpha; this interaction depends on the exposure of the NLS, which itself depends upon genome maturation and/or phosphorylation of the capsid protein. Interacts with host NUP153. Post-translationally, phosphorylated by host SRPK1, SRPK2, and maybe protein kinase C or GAPDH. Phosphorylation is critical for pregenomic RNA packaging. Protein kinase C phosphorylation is stimulated by HBx protein and may play a role in transport of the viral genome to the nucleus at the late step during the viral replication cycle.

Its subcellular location is the virion. The protein localises to the host cytoplasm. In terms of biological role, self assembles to form an icosahedral capsid. Most capsids appear to be large particles with an icosahedral symmetry of T=4 and consist of 240 copies of capsid protein, though a fraction forms smaller T=3 particles consisting of 180 capsid proteins. Entering capsids are transported along microtubules to the nucleus. Phosphorylation of the capsid is thought to induce exposure of nuclear localization signal in the C-terminal portion of the capsid protein that allows binding to the nuclear pore complex via the importin (karyopherin-) alpha and beta. Capsids are imported in intact form through the nuclear pore into the nuclear basket, where it probably binds NUP153. Only capsids that contain the mature viral genome can release the viral DNA and capsid protein into the nucleoplasm. Immature capsids get stuck in the basket. Capsids encapsulate the pre-genomic RNA and the P protein. Pre-genomic RNA is reverse-transcribed into DNA while the capsid is still in the cytoplasm. The capsid can then either be directed to the nucleus, providing more genomes for transcription, or bud through the endoplasmic reticulum to provide new virions. This is Capsid protein from Homo sapiens (Human).